Consider the following 235-residue polypeptide: Class B acid phosphatase (235 aa).

The first 22 residues, 1–22 (MKNLLKLSAIAILAASAVSTFA), serve as a signal peptide directing secretion. Asp-67 (nucleophile) is an active-site residue. Asp-67 and Asp-69 together coordinate Mg(2+). Asp-69 acts as the Proton donor in catalysis. Residues 135 to 136 (TG) and Lys-175 each bind substrate. Mg(2+) is bound at residue Asp-190.

Belongs to the class B bacterial acid phosphatase family. As to quaternary structure, homotetramer. Requires Mg(2+) as cofactor.

The protein localises to the periplasm. The catalysed reaction is a phosphate monoester + H2O = an alcohol + phosphate. In terms of biological role, dephosphorylates several organic phosphate monoesters. Also has a phosphotransferase activity catalyzing the transfer of low-energy phosphate groups from organic phosphate monoesters to free hydroxyl groups of various organic compounds. The protein is Class B acid phosphatase of Haemophilus parainfluenzae (strain T3T1).